Here is an 877-residue protein sequence, read N- to C-terminus: (E,E)-geranyllinalool synthase (877 aa).

Mg(2+) is bound by residues Asp-540 and Asp-544. Substrate is bound by residues Asp-540, Asp-544, Arg-677, and Asn-680. Residues 540–544 (DDFFD) carry the DDXXD motif motif. Asn-680, Ser-684, and Glu-688 together coordinate Mg(2+).

This sequence belongs to the terpene synthase family. Tpsf subfamily. Mg(2+) is required as a cofactor. Mn(2+) serves as cofactor. In terms of tissue distribution, expressed in leaves and flowers.

The protein resides in the cytoplasm. It catalyses the reaction (2E,6E,10E)-geranylgeranyl diphosphate + H2O = (6E,10E)-geranyllinalool + diphosphate. The protein operates within secondary metabolite biosynthesis; terpenoid biosynthesis. Functionally, involved in the biosynthesis of homoterpenes, attractants of herbivores parasitoids and predators (e.g. predatory mites and parasitoid wasps). Involved in diterpene (C20) biosynthesis. Catalyzes the conversion of geranylgeranyl diphosphate to (E,E)-geranyllinalool, the precursor of the insect-induced volatile C16-homoterpene TMTT. The polypeptide is (E,E)-geranyllinalool synthase (Arabidopsis thaliana (Mouse-ear cress)).